Consider the following 395-residue polypeptide: MASPAPRSLSSSSSSSSSSFCPSISPPPRSPSRASLPFSVKCNTVEPLKLVNGKPSVPILDEQSLPKFLHSKRLESSVNRSNTRLKLFSGLANPALAKEVAWYMGLELGKVKIKRFADGEIYVQLEESVRGCDVFIIQPTSPPANENLMELLIMIDACRRASAKNITAVIPYFGYARADRKTQGRESIAAKLVANLITEAGANRVLACDLHSGQSMGYFDIPVDHVYCQPVILDYLASKGIASSDLVVVSPDVGGVARARAFAKKLSDAPLAIVDKRRHAHNVAEVMNLIGDVKGKVAVMLDDMIDTAGTITKGAELLHEEGAREVYACCTHAVFSPPAIERLSSGCFQEVIITNTLPVAEKNFFRQLTVLSTANLLGETIWRVHDDSSVSSIFQ.

Over residues 1-23 the composition is skewed to low complexity; it reads MASPAPRSLSSSSSSSSSSFCPS. The disordered stretch occupies residues 1-33; the sequence is MASPAPRSLSSSSSSSSSSFCPSISPPPRSPSR. The N-terminal 42 residues, 1 to 42, are a transit peptide targeting the chloroplast; that stretch reads MASPAPRSLSSSSSSSSSSFCPSISPPPRSPSRASLPFSVKC. Mg(2+) contacts are provided by D209, H211, D220, and D224. The tract at residues 295 to 310 is binding of phosphoribosylpyrophosphate; that stretch reads GKVAVMLDDMIDTAGT.

The protein belongs to the ribose-phosphate pyrophosphokinase family.

Its subcellular location is the plastid. It localises to the chloroplast. It catalyses the reaction D-ribose 5-phosphate + ATP = 5-phospho-alpha-D-ribose 1-diphosphate + AMP + H(+). The protein is Ribose-phosphate pyrophosphokinase 2, chloroplastic (PRS2) of Spinacia oleracea (Spinach).